The sequence spans 602 residues: MKNLSFLINRRKENTSDSNVYPGKAKSHEPSWIEMDDQTKKDGLDIVHVEFSPDTRAPSDSNKVITEIFDATEDAKEADESERGMPLATALNTYPKAAAWSLLVSTTLIMEGYDTAILGAFYALPIFQRKFGSQNDKTGEWEISASWQIGLTLCYMAGEIVGLQLTGPSVDLVGNRYTLIIALFFLAAFTFILYFCNSLGMIAVGQALCGMPWGCFQCLTVSYASEICPLALRYYLTTYSNLCWLFGQLFAAGIMKNSQKKYADSELGYKLPFALQWILPVPLALGIFFAPESPWWLVKKGRFDEARRSLRRTLSGKGPEKEILVTLEVDKIKVTIDKEKRLTSKEGSYSDCFEDKINRRRTRITCLCWAGQATCGSILIGYSTYFYEKAGVSTEMSFTFSIIQYCLGICATFLSWWASKYFGRYDLYAFGLAFQTIVFFIIGGLGCSSTHGSKMGSGSLLMAVAFFYNLGIAPVVFCLVSEMPSSRLRTKTIILARNTYNVVSIICSVLILYQLNSKKWNWGAKSGFFWGVLCFCTLIWAVVDLPETAGKTFVEINELFKLGVSARKFKSTKVDPFVVKNPPKDVSHNDPKGDIEASIAEE.

The Cytoplasmic segment spans residues 1–106 (MKNLSFLINR…AAAWSLLVST (106 aa)). A helical membrane pass occupies residues 107-127 (TLIMEGYDTAILGAFYALPIF). Residues 128–142 (QRKFGSQNDKTGEWE) lie on the Extracellular side of the membrane. A helical transmembrane segment spans residues 143–163 (ISASWQIGLTLCYMAGEIVGL). Over 164–178 (QLTGPSVDLVGNRYT) the chain is Cytoplasmic. The helical transmembrane segment at 179-199 (LIIALFFLAAFTFILYFCNSL) threads the bilayer. Position 200 (glycine 200) is a topological domain, extracellular. Residues 201–221 (MIAVGQALCGMPWGCFQCLTV) form a helical membrane-spanning segment. Residues 222 to 234 (SYASEICPLALRY) lie on the Cytoplasmic side of the membrane. The chain crosses the membrane as a helical span at residues 235-255 (YLTTYSNLCWLFGQLFAAGIM). Topologically, residues 256-270 (KNSQKKYADSELGYK) are extracellular. A helical transmembrane segment spans residues 271 to 291 (LPFALQWILPVPLALGIFFAP). Residues 292-363 (ESPWWLVKKG…EDKINRRRTR (72 aa)) are Cytoplasmic-facing. The helical transmembrane segment at 364-384 (ITCLCWAGQATCGSILIGYST) threads the bilayer. Residues 385 to 397 (YFYEKAGVSTEMS) lie on the Extracellular side of the membrane. Residues 398–418 (FTFSIIQYCLGICATFLSWWA) form a helical membrane-spanning segment. At 419-426 (SKYFGRYD) the chain is on the cytoplasmic side. A helical membrane pass occupies residues 427–447 (LYAFGLAFQTIVFFIIGGLGC). The Extracellular segment spans residues 448–459 (SSTHGSKMGSGS). The helical transmembrane segment at 460 to 480 (LLMAVAFFYNLGIAPVVFCLV) threads the bilayer. Residues 481–492 (SEMPSSRLRTKT) are Cytoplasmic-facing. Residues 493–513 (IILARNTYNVVSIICSVLILY) traverse the membrane as a helical segment. Residues 514–525 (QLNSKKWNWGAK) are Extracellular-facing. Residues 526-546 (SGFFWGVLCFCTLIWAVVDLP) form a helical membrane-spanning segment. Residues 547–602 (ETAGKTFVEINELFKLGVSARKFKSTKVDPFVVKNPPKDVSHNDPKGDIEASIAEE) are Cytoplasmic-facing. A disordered region spans residues 580 to 602 (KNPPKDVSHNDPKGDIEASIAEE). Residues 582 to 595 (PPKDVSHNDPKGDI) are compositionally biased toward basic and acidic residues.

Belongs to the major facilitator superfamily. Sugar transporter (TC 2.A.1.1) family.

The protein resides in the cell membrane. Its function is as follows. High-affinity uptake of maltose and maltotriose. Also transports alpha-methylglucoside, glucose and turanose but not melezitose or trehalose. In Saccharomyces cerevisiae (strain AWRI1631) (Baker's yeast), this protein is Alpha-glucosides permease MPH3 (MPH3).